A 761-amino-acid polypeptide reads, in one-letter code: Translation initiation factor IF-2 (761 aa).

Positions 39-179 (DEETLNKAKQ…KVNHQQMPLP (141 aa)) are disordered. Residues 45 to 105 (KAKQAGKPAA…NNQQSQSQGQ (61 aa)) are compositionally biased toward low complexity. Residues 106–120 (TKRPSQASNNQSGAA) are compositionally biased toward polar residues. Over residues 142-154 (PGSNNRRPGNNQN) the composition is skewed to low complexity. The span at 155 to 168 (RRNHGNRGGKRRPQ) shows a compositional bias: basic residues. The region spanning 262–435 (ERPPVVTIMG…EVEEFKANPD (174 aa)) is the tr-type G domain. Residues 271–278 (GHVDHGKT) are G1. GTP is bound at residue 271-278 (GHVDHGKT). The tract at residues 296–300 (GITQH) is G2. The tract at residues 317-320 (DTPG) is G3. GTP contacts are provided by residues 317–321 (DTPGH) and 371–374 (NKID). Residues 371 to 374 (NKID) form a G4 region. Residues 407–409 (SAL) form a G5 region.

The protein belongs to the TRAFAC class translation factor GTPase superfamily. Classic translation factor GTPase family. IF-2 subfamily.

The protein localises to the cytoplasm. Functionally, one of the essential components for the initiation of protein synthesis. Protects formylmethionyl-tRNA from spontaneous hydrolysis and promotes its binding to the 30S ribosomal subunits. Also involved in the hydrolysis of GTP during the formation of the 70S ribosomal complex. The polypeptide is Translation initiation factor IF-2 (Shouchella clausii (strain KSM-K16) (Alkalihalobacillus clausii)).